We begin with the raw amino-acid sequence, 741 residues long: Homeobox protein AHox1 (741 aa).

Disordered regions lie at residues 1–30, 61–96, 146–183, 203–226, 357–383, 476–501, and 616–642; these read MEKM…KSSS, KRRL…NFCR, VNPL…KSCC, ADSD…INQD, KTEE…PIRT, FDFP…NPQT, and QYGH…GTVK. Residues 7 to 19 are compositionally biased toward low complexity; the sequence is KSVSPVPFNNSNN. Residues 63-78 are compositionally biased toward basic and acidic residues; the sequence is RLLDPQNKKKQNRFER. The segment covering 79-92 has biased composition (polar residues); the sequence is YSSSNHAQEQSSEE. The segment covering 169–181 has biased composition (low complexity); sequence SFSSSSEASDSKS. Positions 363–375 are enriched in polar residues; sequence RSPSETKQYSPDA. Over residues 616–629 the composition is skewed to polar residues; it reads QYGHMSSSQNPHSE. Residues 630 to 639 show a composition bias toward basic and acidic residues; sequence TQNRSEEVRG. The homeobox DNA-binding region spans 645–704; that stretch reads RKWNRAVFSLMQRRGLEKSFQSQKYVAKPERRKLADALSLTDAQVKIWFQNRRMKWRQEI. Residues 722-741 are disordered; sequence EIEKEKTQTPSDEGEVINVD.

This sequence belongs to the H2.0 homeobox family. Expressed in the tissues of endodermal origin.

The protein localises to the nucleus. In Halocynthia roretzi (Sea squirt), this protein is Homeobox protein AHox1 (AHOX1).